The primary structure comprises 668 residues: MGVCCATAPASDRRSRHPDMQNWNVAVTDFSKTPLLDTIRTPADLRKLRVEQLRQVADELRKETIDAVSVTGGHFGAGLGVVELTTAIHYIFDTPRDRLIWDVGHQAYPHKILTGRRDRIRTLRTGGGLSGFTKRTESDYDPFGAAHSSTSISASLGMAVARDLSGGKNNVIAVIGDGAMSAGMAYEAMNNAGAMNSRLIVILNDNDMSIAPPVGAMSAYLSRLYSGKTYRSLREAAKQLGKHLPKMIADRAERVEEYSRGFMVNSGTLFEELGFYYVGPIDGHNLDHLLPVLKNVRDMENGPILLHVVTQKGKGYGPAEAAADKYHAVVKFDVSTGAQSKSKPNAPAYQNVFGQSLVKEAEKDDKIIAITAAMPSGTGVDIFNKAFPKRTFDVGIAEQHAVTFAAGLATEGFKPFCAIYSTFLQRGYDQIVHDVAIQSLPVRFAIDRAGLVGADGATHAGSFDNAYLGCLPNFVIMAASDEAELVHMVATQVAINDRPSAVRYPRGEGRGVEMPEVGVPLPIGKGRIVRQGSKVALLSLGTRLAECEKAADELAAHGLSTTIADARFMKPLDVDLVLKLARDHDVLITIEEGSIGGFGSHVMQTLAEHGALDSGQVRVRAMVLPDEFLDHDTPNAMYASVGLDDRGIVAKVFEALGKDVTTETVKLA.

Residues His-105 and 146–148 (AHS) each bind thiamine diphosphate. Asp-177 lines the Mg(2+) pocket. Thiamine diphosphate contacts are provided by residues 178–179 (GA), Asn-206, Tyr-316, and Glu-398. Residue Asn-206 participates in Mg(2+) binding.

The protein belongs to the transketolase family. DXPS subfamily. In terms of assembly, homodimer. Requires Mg(2+) as cofactor. Thiamine diphosphate serves as cofactor.

It catalyses the reaction D-glyceraldehyde 3-phosphate + pyruvate + H(+) = 1-deoxy-D-xylulose 5-phosphate + CO2. It participates in metabolic intermediate biosynthesis; 1-deoxy-D-xylulose 5-phosphate biosynthesis; 1-deoxy-D-xylulose 5-phosphate from D-glyceraldehyde 3-phosphate and pyruvate: step 1/1. Catalyzes the acyloin condensation reaction between C atoms 2 and 3 of pyruvate and glyceraldehyde 3-phosphate to yield 1-deoxy-D-xylulose-5-phosphate (DXP). The sequence is that of 1-deoxy-D-xylulose-5-phosphate synthase from Nitrobacter hamburgensis (strain DSM 10229 / NCIMB 13809 / X14).